A 76-amino-acid chain; its full sequence is U7-lycotoxin-Ls1b (76 aa).

An N-terminal signal peptide occupies residues 1 to 22; the sequence is MKLISFTGLALLLIVSLIDVEA. A propeptide spanning residues 23 to 26 is cleaved from the precursor; sequence QNEG.

It belongs to the neurotoxin 19 (CSTX) family. 07 (U7-Lctx) subfamily. Post-translationally, contains 4 disulfide bonds. Expressed by the venom gland.

The protein resides in the secreted. This Lycosa singoriensis (Wolf spider) protein is U7-lycotoxin-Ls1b.